Consider the following 39-residue polypeptide: Phosphate starvation-inducible protein 1 (39 aa).

It localises to the cell outer membrane. In Pseudomonas fluorescens, this protein is Phosphate starvation-inducible protein 1.